A 514-amino-acid polypeptide reads, in one-letter code: Maturase K (514 aa).

Belongs to the intron maturase 2 family. MatK subfamily.

The protein localises to the plastid. It is found in the chloroplast. Usually encoded in the trnK tRNA gene intron. Probably assists in splicing its own and other chloroplast group II introns. This Lepidozamia peroffskyana (Peroffsky's lepidozamia) protein is Maturase K.